A 180-amino-acid chain; its full sequence is Peptide deformylase (180 aa).

C96 and H138 together coordinate Fe cation. The active site involves E139. A Fe cation-binding site is contributed by H142.

The protein belongs to the polypeptide deformylase family. The cofactor is Fe(2+).

The catalysed reaction is N-terminal N-formyl-L-methionyl-[peptide] + H2O = N-terminal L-methionyl-[peptide] + formate. Functionally, removes the formyl group from the N-terminal Met of newly synthesized proteins. Requires at least a dipeptide for an efficient rate of reaction. N-terminal L-methionine is a prerequisite for activity but the enzyme has broad specificity at other positions. The chain is Peptide deformylase from Rhodopseudomonas palustris (strain BisA53).